The following is a 642-amino-acid chain: Threonine--tRNA ligase (642 aa).

The 61-residue stretch at 1–61 (MPIITLPDGS…EEDASLEIIT (61 aa)) folds into the TGS domain. The tract at residues 244 to 535 (DHRKIGKQLD…LIEEYAGFFP (292 aa)) is catalytic. Residues Cys-335, His-386, and His-512 each contribute to the Zn(2+) site.

The protein belongs to the class-II aminoacyl-tRNA synthetase family. As to quaternary structure, homodimer. The cofactor is Zn(2+).

The protein localises to the cytoplasm. It catalyses the reaction tRNA(Thr) + L-threonine + ATP = L-threonyl-tRNA(Thr) + AMP + diphosphate + H(+). Catalyzes the attachment of threonine to tRNA(Thr) in a two-step reaction: L-threonine is first activated by ATP to form Thr-AMP and then transferred to the acceptor end of tRNA(Thr). Also edits incorrectly charged L-seryl-tRNA(Thr). The sequence is that of Threonine--tRNA ligase from Vibrio vulnificus (strain CMCP6).